Here is an 897-residue protein sequence, read N- to C-terminus: Isoleucine--tRNA ligase (897 aa).

The 'HIGH' region motif lies at proline 59–histidine 69. Glutamate 552 lines the L-isoleucyl-5'-AMP pocket. A 'KMSKS' region motif is present at residues lysine 593–serine 597. Lysine 596 is a binding site for ATP. Zn(2+) contacts are provided by cysteine 872, cysteine 875, cysteine 890, and cysteine 893.

The protein belongs to the class-I aminoacyl-tRNA synthetase family. IleS type 1 subfamily. Monomer. The cofactor is Zn(2+).

Its subcellular location is the cytoplasm. It catalyses the reaction tRNA(Ile) + L-isoleucine + ATP = L-isoleucyl-tRNA(Ile) + AMP + diphosphate. In terms of biological role, catalyzes the attachment of isoleucine to tRNA(Ile). As IleRS can inadvertently accommodate and process structurally similar amino acids such as valine, to avoid such errors it has two additional distinct tRNA(Ile)-dependent editing activities. One activity is designated as 'pretransfer' editing and involves the hydrolysis of activated Val-AMP. The other activity is designated 'posttransfer' editing and involves deacylation of mischarged Val-tRNA(Ile). The polypeptide is Isoleucine--tRNA ligase (Mycoplasmoides gallisepticum (strain R(low / passage 15 / clone 2)) (Mycoplasma gallisepticum)).